The following is a 571-amino-acid chain: MDRAVNRVVLENEEREAKNTWRLVFRIAVLLLMVMTLAISAAALVYSMGASTPRDLAGISTVISKTEDKVTSLLSSKQDVIDRIYKQVALESPLALLNTESIIMNAITSLSYQINGAANNSGCGEPVHDPDYIGGIGKELIVDDISDVTSFYPSAYQEHLNFIPAPTTGSGCTRIPSFDMSTTHYCYTHNVILSGCRDHSHSHQYLALGVLRTSATGRVFFSTLRSINLDDTQNRKSCSVSATPLGCDMLCSKVTETEEEDYKSVTPTSMVHGRLGFDGQYHEKDLDTTVLFKDWVANYPGVGGGSFIDDRVWFPVYGGLKPNSPSDTAQEGKYVIYKRYNNTCPDEQDYQIRMAKSSYKPGRFGGKRVQQAILSIKVSTSLGEDPVLTIPPNTITLMGAEGRVLTVGTSHFLYQRGSSYFSPALLYPMTVNNKTATLHSPYTFNAFTRPGSVPCQASARCPNSCITGVYTDPYPLIFHRNHTLRGVFGTMLDDEQARLNPVSAVFDNISRSRVTRVSSSSTKAAYTTSTCFKVVKTNKAYCLSIAEISNTLFGEFRIVPLLVEILKDDRV.

The Intravirion portion of the chain corresponds to 1–26 (MDRAVNRVVLENEEREAKNTWRLVFR). Residues 27–47 (IAVLLLMVMTLAISAAALVYS) form a helical membrane-spanning segment. Residues 48-571 (MGASTPRDLA…LVEILKDDRV (524 aa)) are Virion surface-facing. The N-linked (GlcNAc...) asparagine; by host glycan is linked to N119. Residues 124-152 (GEPVHDPDYIGGIGKELIVDDISDVTSFY) are important for interaction with fusion/F protein. 3 disulfides stabilise this stretch: C172/C196, C186/C247, and C238/C251. The segment at 234–239 (NRKSCS) is involved in neuraminidase activity. N-linked (GlcNAc...) asparagine; by host glycosylation is found at N341 and N433. 2 cysteine pairs are disulfide-bonded: C344–C461 and C455–C465. N481, N508, and N538 each carry an N-linked (GlcNAc...) asparagine; by host glycan. The cysteines at positions 531 and 542 are disulfide-linked.

It belongs to the paramyxoviruses hemagglutinin-neuraminidase family. Homotetramer; composed of disulfide-linked homodimers. Interacts with F protein trimer. Interacts with host CG-1B; this interaction inhibits viral adsorption and replication rather than internalization.

It is found in the virion membrane. Its subcellular location is the host cell membrane. The enzyme catalyses Hydrolysis of alpha-(2-&gt;3)-, alpha-(2-&gt;6)-, alpha-(2-&gt;8)- glycosidic linkages of terminal sialic acid residues in oligosaccharides, glycoproteins, glycolipids, colominic acid and synthetic substrates.. Functionally, mediates the viral entry into the host cell together with fusion/F protein. Attaches the virus to sialic acid-containing cell receptors and thereby initiates infection. Binding of HN protein to the receptor induces a conformational change that allows the F protein to trigger virion/cell membranes fusion. Its function is as follows. Neuraminidase activity ensures the efficient spread of the virus by dissociating the mature virions from the neuraminic acid containing glycoproteins. This chain is Hemagglutinin-neuraminidase (HN), found in Gallus gallus (Chicken).